A 133-amino-acid chain; its full sequence is Snaclec botrocetin subunit alpha (133 aa).

Disulfide bonds link cysteine 2–cysteine 13, cysteine 30–cysteine 128, and cysteine 103–cysteine 120. The 121-residue stretch at 9–129 (YEGNCYKFFQ…CAQKNPFVCK (121 aa)) folds into the C-type lectin domain.

Belongs to the snaclec family. As to quaternary structure, heterodimer of subunits alpha and beta; disulfide-linked. Botrocetin and vWF form a soluble complex. As to expression, expressed by the venom gland.

It is found in the secreted. Its function is as follows. Snaclec that binds to von Willebrand factor (VWF) and induces its interaction with GPIbalpha (GP1BA) (via the vWF A1 domain), resulting in platelet aggregation. The chain is Snaclec botrocetin subunit alpha from Bothrops jararaca (Jararaca).